The following is a 208-amino-acid chain: NADH-ubiquinone oxidoreductase chain 4 (208 aa).

A run of 6 helical transmembrane segments spans residues 23–43 (VWIN…VTLW), 60–80 (SLSS…LLAS), 93–113 (KMYI…FSAN), 114–134 (ELIM…IIIT), 147–167 (LYFL…LISI), and 188–208 (PTWS…IKMP).

Belongs to the complex I subunit 4 family. Core subunit of respiratory chain NADH dehydrogenase (Complex I) which is composed of 45 different subunits.

The protein resides in the mitochondrion inner membrane. It carries out the reaction a ubiquinone + NADH + 5 H(+)(in) = a ubiquinol + NAD(+) + 4 H(+)(out). In terms of biological role, core subunit of the mitochondrial membrane respiratory chain NADH dehydrogenase (Complex I) which catalyzes electron transfer from NADH through the respiratory chain, using ubiquinone as an electron acceptor. Essential for the catalytic activity and assembly of complex I. The protein is NADH-ubiquinone oxidoreductase chain 4 (MT-ND4) of Phodopus sungorus (Striped hairy-footed hamster).